A 558-amino-acid chain; its full sequence is Arginine--tRNA ligase (558 aa).

Residues 119 to 129 (ANPDGPLHVGH) carry the 'HIGH' region motif.

The protein belongs to the class-I aminoacyl-tRNA synthetase family.

The protein localises to the cytoplasm. The enzyme catalyses tRNA(Arg) + L-arginine + ATP = L-arginyl-tRNA(Arg) + AMP + diphosphate. The protein is Arginine--tRNA ligase of Methanothrix thermoacetophila (strain DSM 6194 / JCM 14653 / NBRC 101360 / PT) (Methanosaeta thermophila).